The primary structure comprises 526 residues: Exodeoxyribonuclease 7 large subunit (526 aa).

The disordered stretch occupies residues 496 to 526 (GAMTTEGGTPPAGAKKRSAKPADPTKQGSLF).

It belongs to the XseA family. In terms of assembly, heterooligomer composed of large and small subunits.

The protein localises to the cytoplasm. The catalysed reaction is Exonucleolytic cleavage in either 5'- to 3'- or 3'- to 5'-direction to yield nucleoside 5'-phosphates.. In terms of biological role, bidirectionally degrades single-stranded DNA into large acid-insoluble oligonucleotides, which are then degraded further into small acid-soluble oligonucleotides. This is Exodeoxyribonuclease 7 large subunit from Rhizobium etli (strain CIAT 652).